A 55-amino-acid polypeptide reads, in one-letter code: ATP synthase F(0) complex subunit 8 (55 aa).

A helical membrane pass occupies residues 4-24 (LNPAPWFAILVFSWLVFLTVI). The interval 36-55 (EPTSQSTEKTKPEPWNWPWH) is disordered.

Belongs to the ATPase protein 8 family. As to quaternary structure, component of the ATP synthase complex composed at least of ATP5F1A/subunit alpha, ATP5F1B/subunit beta, ATP5MC1/subunit c (homooctomer), MT-ATP6/subunit a, MT-ATP8/subunit 8, ATP5ME/subunit e, ATP5MF/subunit f, ATP5MG/subunit g, ATP5MK/subunit k, ATP5MJ/subunit j, ATP5F1C/subunit gamma, ATP5F1D/subunit delta, ATP5F1E/subunit epsilon, ATP5PF/subunit F6, ATP5PB/subunit b, ATP5PD/subunit d, ATP5PO/subunit OSCP. ATP synthase complex consists of a soluble F(1) head domain (subunits alpha(3) and beta(3)) - the catalytic core - and a membrane F(0) domain - the membrane proton channel (subunits c, a, 8, e, f, g, k and j). These two domains are linked by a central stalk (subunits gamma, delta, and epsilon) rotating inside the F1 region and a stationary peripheral stalk (subunits F6, b, d, and OSCP).

The protein localises to the mitochondrion membrane. In terms of biological role, subunit 8, of the mitochondrial membrane ATP synthase complex (F(1)F(0) ATP synthase or Complex V) that produces ATP from ADP in the presence of a proton gradient across the membrane which is generated by electron transport complexes of the respiratory chain. ATP synthase complex consist of a soluble F(1) head domain - the catalytic core - and a membrane F(1) domain - the membrane proton channel. These two domains are linked by a central stalk rotating inside the F(1) region and a stationary peripheral stalk. During catalysis, ATP synthesis in the catalytic domain of F(1) is coupled via a rotary mechanism of the central stalk subunits to proton translocation. In vivo, can only synthesize ATP although its ATP hydrolase activity can be activated artificially in vitro. Part of the complex F(0) domain. This Salvelinus alpinus (Arctic char) protein is ATP synthase F(0) complex subunit 8.